Here is a 130-residue protein sequence, read N- to C-terminus: Large ribosomal subunit protein bL17 (130 aa).

It belongs to the bacterial ribosomal protein bL17 family. Part of the 50S ribosomal subunit. Contacts protein L32.

This chain is Large ribosomal subunit protein bL17, found in Buchnera aphidicola subsp. Acyrthosiphon pisum (strain 5A).